The chain runs to 130 residues: MAENQYYGTGRRKSSTARVFIKPGNGKIVINQRSLEQYFGRETARMVVRQPLELVDMVEKLDLYITVKGGGISGQAGAIRHGITRALMEYDESLRSELRKAGFVTRDARQVERKKVGLRKARRRPQFSKR.

It belongs to the universal ribosomal protein uS9 family.

This chain is Small ribosomal subunit protein uS9, found in Shigella dysenteriae serotype 1 (strain Sd197).